Consider the following 593-residue polypeptide: 3-hydroxy-3-methylglutaryl-coenzyme A reductase (593 aa).

The segment at 1–36 is disordered; the sequence is MDVRRRSINSIHQIPSVGGTAPPMLKPKQPTKVDAV. The next 2 membrane-spanning stretches (helical) occupy residues 52-72 and 94-114; these read LYIT…YLLV and AIFT…IGLV. The tract at residues 115–177 is linker; that stretch reads QPFTSRSSHD…PVPISPPSSE (63 aa). A catalytic region spans residues 178–593; it reads EDEEIIKSVV…SNKDVTKASS (416 aa). The active-site Charge relay system is the Glu-272. An N-linked (GlcNAc...) asparagine glycan is attached at Asn-336. Lys-404 serves as the catalytic Charge relay system. The N-linked (GlcNAc...) asparagine glycan is linked to Asn-449. Asp-480 acts as the Charge relay system in catalysis. His-578 functions as the Proton donor in the catalytic mechanism. A glycan (N-linked (GlcNAc...) asparagine) is linked at Asn-582.

This sequence belongs to the HMG-CoA reductase family.

It is found in the endoplasmic reticulum membrane. It catalyses the reaction (R)-mevalonate + 2 NADP(+) + CoA = (3S)-3-hydroxy-3-methylglutaryl-CoA + 2 NADPH + 2 H(+). It functions in the pathway metabolic intermediate biosynthesis; (R)-mevalonate biosynthesis; (R)-mevalonate from acetyl-CoA: step 3/3. In terms of biological role, catalyzes the synthesis of mevalonate. The specific precursor of all isoprenoid compounds present in plants. The protein is 3-hydroxy-3-methylglutaryl-coenzyme A reductase of Camptotheca acuminata (Happy tree).